The sequence spans 282 residues: 4-hydroxybenzoate octaprenyltransferase (282 aa).

The next 9 membrane-spanning stretches (helical) occupy residues 17–37, 40–60, 90–110, 113–133, 135–155, 163–183, 207–227, 231–251, and 262–282; these read IGILLLWYPTAWALWMANQGF, IDLLMIFLFGTVFMRSAGCVI, AFILLFILLCASLLLLLKLPI, FYFAVISVLITFLYPFCKRFL, APQLILGLAFSMGIPMAFIAS, FIVLFLINFSWIIAYDTMYAM, LIIALLLIFLHSLWLVWAINK, WFFYLLWCTAAGILTYQLKLI, and AFLVSGYYGLVMWFAVGLALI.

This sequence belongs to the UbiA prenyltransferase family. Requires Mg(2+) as cofactor.

The protein resides in the cell inner membrane. It catalyses the reaction all-trans-octaprenyl diphosphate + 4-hydroxybenzoate = 4-hydroxy-3-(all-trans-octaprenyl)benzoate + diphosphate. It participates in cofactor biosynthesis; ubiquinone biosynthesis. Its function is as follows. Catalyzes the prenylation of para-hydroxybenzoate (PHB) with an all-trans polyprenyl group. Mediates the second step in the final reaction sequence of ubiquinone-8 (UQ-8) biosynthesis, which is the condensation of the polyisoprenoid side chain with PHB, generating the first membrane-bound Q intermediate 3-octaprenyl-4-hydroxybenzoate. This chain is 4-hydroxybenzoate octaprenyltransferase, found in Legionella pneumophila (strain Corby).